The sequence spans 136 residues: Histone H3-like 3 (136 aa).

The span at 1 to 15 (MARTKQTARKSHGGK) shows a compositional bias: basic residues. The segment at 1 to 42 (MARTKQTARKSHGGKAPRTLLATKAARKSAPTTGGVKKPHRY) is disordered. Residues Lys-5 and Lys-10 each carry the N6,N6,N6-trimethyllysine; alternate modification. Residues Lys-5 and Lys-10 each carry the N6,N6-dimethyllysine; alternate modification. 2 positions are modified to N6-methyllysine; alternate: Lys-5 and Lys-10. N6-acetyllysine; alternate is present on Lys-10. Phosphoserine is present on Ser-11. Position 15 is an N6-acetyllysine (Lys-15). Lys-24 and Lys-28 each carry N6-methyllysine; alternate. Lys-24 bears the N6-acetyllysine; alternate mark. Lys-28 is modified (N6,N6,N6-trimethyllysine; alternate). At Lys-28 the chain carries N6,N6-dimethyllysine; alternate. Ser-29 is modified (phosphoserine). Lys-37 is subject to N6,N6,N6-trimethyllysine; alternate. The residue at position 37 (Lys-37) is an N6,N6-dimethyllysine; alternate. N6-methyllysine; alternate is present on Lys-37.

Belongs to the histone H3 family. In terms of assembly, the nucleosome is a histone octamer containing two molecules each of H2A, H2B, H3 and H4 assembled in one H3-H4 heterotetramer and two H2A-H2B heterodimers. The octamer wraps approximately 147 bp of DNA. In terms of tissue distribution, expressed in roots, seedlings, leaves and open flowers.

Its subcellular location is the nucleus. The protein localises to the chromosome. Core component of nucleosome. Nucleosomes wrap and compact DNA into chromatin, limiting DNA accessibility to the cellular machineries which require DNA as a template. Histones thereby play a central role in transcription regulation, DNA repair, DNA replication and chromosomal stability. DNA accessibility is regulated via a complex set of post-translational modifications of histones, also called histone code, and nucleosome remodeling. This chain is Histone H3-like 3, found in Arabidopsis thaliana (Mouse-ear cress).